A 521-amino-acid chain; its full sequence is uncharacterized protein (521 aa).

The segment at 1 to 25 (MLQRSLGVNGRKLAMSARSAKRERK) is disordered. 6 helical membrane-spanning segments follow: residues 68 to 88 (GAVWVLPTFGVAIGLGSGAVL), 114 to 134 (VLIVVSATMITTIGIVFSLTV), 160 to 180 (VVLAIFACTFAYSTGGLHTVG), 192 to 212 (VAVTGSLALAFVSIAALIYFL), 290 to 310 (ALLVTFVGDYVTAGGLLGWCW), and 399 to 419 (LLFWLPYPSFATYLHVGCAQI).

The protein localises to the cell membrane. This is an uncharacterized protein from Mycobacterium tuberculosis (strain CDC 1551 / Oshkosh).